The sequence spans 226 residues: Ribonuclease 3 (226 aa).

An RNase III domain is found at Ile6–Asp128. Mg(2+) is bound at residue Glu41. Asp45 is a catalytic residue. Residues Asp114 and Glu117 each coordinate Mg(2+). Glu117 is a catalytic residue. One can recognise a DRBM domain in the interval Asp155–Leu225.

The protein belongs to the ribonuclease III family. As to quaternary structure, homodimer. The cofactor is Mg(2+).

It localises to the cytoplasm. The enzyme catalyses Endonucleolytic cleavage to 5'-phosphomonoester.. Digests double-stranded RNA. Involved in the processing of primary rRNA transcript to yield the immediate precursors to the large and small rRNAs (23S and 16S). Processes some mRNAs, and tRNAs when they are encoded in the rRNA operon. Processes pre-crRNA and tracrRNA of type II CRISPR loci if present in the organism. This chain is Ribonuclease 3, found in Enterobacter sp. (strain 638).